Consider the following 342-residue polypeptide: Nucleoid-associated protein Spea_1765 (342 aa).

Belongs to the YejK family.

It is found in the cytoplasm. Its subcellular location is the nucleoid. The protein is Nucleoid-associated protein Spea_1765 of Shewanella pealeana (strain ATCC 700345 / ANG-SQ1).